A 515-amino-acid polypeptide reads, in one-letter code: 4-hydroxybenzoate brominase (decarboxylating) (515 aa).

Residues S13, E32, V40, F41, H51, V102, and Q364 each coordinate FAD.

The protein belongs to the FMO family. Requires FAD as cofactor.

It catalyses the reaction 2 bromide + 4-hydroxybenzoate + 2 NADPH + 2 O2 + 5 H(+) = 2,4-dibromophenol + CO2 + 2 NADP(+) + 4 H2O. It carries out the reaction bromide + 4-hydroxybenzoate + NADPH + O2 + 2 H(+) = 3-bromo-4-hydroxybenzoate + NADP(+) + 2 H2O. The enzyme catalyses 3-bromo-4-hydroxybenzoate + bromide + NADPH + O2 + 3 H(+) = 2,4-dibromophenol + CO2 + NADP(+) + 2 H2O. The catalysed reaction is 3,4-dihydroxybenzoate + 2 bromide + 2 NADPH + 2 O2 + 5 H(+) = 3,5-dibromobenzene-1,2-diol + CO2 + 2 NADP(+) + 4 H2O. It catalyses the reaction 3,4-dihydroxybenzoate + bromide + NADPH + O2 + 2 H(+) = 3-bromo-4,5-dihydroxybenzoate + NADP(+) + 2 H2O. It carries out the reaction 3-bromo-4,5-dihydroxybenzoate + bromide + NADPH + O2 + 3 H(+) = 3,5-dibromobenzene-1,2-diol + CO2 + NADP(+) + 2 H2O. Its activity is regulated as follows. Activity is abolished in the absence of either bromide or NADPH, while a partial reduction in activity is observed upon omission of FAD. Activity does not require the addition of a flavin reductase to regenerate FADH(2) in situ. In terms of biological role, brominase involved in the biosynthesis of polybrominated aromatic organic compounds. Catalyzes the bromination of 4-hydroxybenzoate (4-HBA) to 3-bromo-4-hydroxybenzoate, followed by bromination and decarboxylation of 3-bromo-4-hydroxybenzoate to 2,4-dibromophenol. Can also use 3,4-dihydroxybenzoate, with lower efficiency, forming 3-bromo-4,5-dihydroxybenzoate and 3,5-dibromobenzene-1,2-diol. Can utilize iodide in vivo leading to the formation of iodophenols, but cannot use chloride. The chain is 4-hydroxybenzoate brominase (decarboxylating) from Pseudoalteromonas luteoviolacea (strain 2ta16).